The primary structure comprises 164 residues: Crossover junction endodeoxyribonuclease RuvC (164 aa).

Active-site residues include D7, E67, and D140. Residues D7, E67, and D140 each contribute to the Mg(2+) site.

This sequence belongs to the RuvC family. As to quaternary structure, homodimer which binds Holliday junction (HJ) DNA. The HJ becomes 2-fold symmetrical on binding to RuvC with unstacked arms; it has a different conformation from HJ DNA in complex with RuvA. In the full resolvosome a probable DNA-RuvA(4)-RuvB(12)-RuvC(2) complex forms which resolves the HJ. It depends on Mg(2+) as a cofactor.

Its subcellular location is the cytoplasm. The catalysed reaction is Endonucleolytic cleavage at a junction such as a reciprocal single-stranded crossover between two homologous DNA duplexes (Holliday junction).. The RuvA-RuvB-RuvC complex processes Holliday junction (HJ) DNA during genetic recombination and DNA repair. Endonuclease that resolves HJ intermediates. Cleaves cruciform DNA by making single-stranded nicks across the HJ at symmetrical positions within the homologous arms, yielding a 5'-phosphate and a 3'-hydroxyl group; requires a central core of homology in the junction. The consensus cleavage sequence is 5'-(A/T)TT(C/G)-3'. Cleavage occurs on the 3'-side of the TT dinucleotide at the point of strand exchange. HJ branch migration catalyzed by RuvA-RuvB allows RuvC to scan DNA until it finds its consensus sequence, where it cleaves and resolves the cruciform DNA. The polypeptide is Crossover junction endodeoxyribonuclease RuvC (Chloroflexus aurantiacus (strain ATCC 29364 / DSM 637 / Y-400-fl)).